We begin with the raw amino-acid sequence, 187 residues long: Transmembrane protein 212 (187 aa).

Helical transmembrane passes span 11-31 (TLVT…FPVF), 42-62 (VWIA…SLVL), 76-96 (AVFT…TVAL), 106-126 (FYSF…TFPF), and 148-168 (LQVL…AVFI).

The protein localises to the membrane. The chain is Transmembrane protein 212 (Tmem212) from Mus musculus (Mouse).